Reading from the N-terminus, the 313-residue chain is Fructose-1,6-bisphosphatase class 1 (313 aa).

Residues glutamate 90, aspartate 111, leucine 113, and aspartate 114 each contribute to the Mg(2+) site. Substrate contacts are provided by residues 114 to 117 (DGSS), tyrosine 222, and lysine 253. Glutamate 259 contributes to the Mg(2+) binding site.

The protein belongs to the FBPase class 1 family. In terms of assembly, homotetramer. It depends on Mg(2+) as a cofactor.

It localises to the cytoplasm. It catalyses the reaction beta-D-fructose 1,6-bisphosphate + H2O = beta-D-fructose 6-phosphate + phosphate. It participates in carbohydrate biosynthesis; gluconeogenesis. In Geotalea uraniireducens (strain Rf4) (Geobacter uraniireducens), this protein is Fructose-1,6-bisphosphatase class 1.